We begin with the raw amino-acid sequence, 507 residues long: L-threonine dehydratase biosynthetic IlvA (507 aa).

Lys-52 bears the N6-(pyridoxal phosphate)lysine mark. Residues Asn-79, 182 to 186 (GGGGL), and Ser-309 contribute to the pyridoxal 5'-phosphate site. 2 consecutive ACT-like domains span residues 333-404 (AVFA…DLTH) and 427-498 (RLFR…EESA).

It belongs to the serine/threonine dehydratase family. In terms of assembly, homotetramer. The cofactor is pyridoxal 5'-phosphate.

The enzyme catalyses L-threonine = 2-oxobutanoate + NH4(+). It functions in the pathway amino-acid biosynthesis; L-isoleucine biosynthesis; 2-oxobutanoate from L-threonine: step 1/1. Its function is as follows. Catalyzes the anaerobic formation of alpha-ketobutyrate and ammonia from threonine in a two-step reaction. The first step involved a dehydration of threonine and a production of enamine intermediates (aminocrotonate), which tautomerizes to its imine form (iminobutyrate). Both intermediates are unstable and short-lived. The second step is the nonenzymatic hydrolysis of the enamine/imine intermediates to form 2-ketobutyrate and free ammonia. In the low water environment of the cell, the second step is accelerated by RidA. The chain is L-threonine dehydratase biosynthetic IlvA (ilvA) from Burkholderia multivorans (strain ATCC 17616 / 249).